The primary structure comprises 435 residues: MKTTYVNATIVTMNEQNEVIENGYIIVENDKIIDVNSGEFASDFEVDEVIDMKGKWVLPGLVNTHTHVVMSLLRGIGDDMLLQPWLETRIWPLESQFTPELAVASTELGLLEMVKSGTTSFSDMFNPIGVDQDAIMETVSRSGMRAAVSRTLFSFGTQEDEKKAIEEAEKYVKRYYNESGMLTTMVAPHSPYTCSTELLEECARIAVENQTMVHIHLSETEREVRDIEAQYGKRPVEYVASCGLFKRPTVIAHGVVLNDNERAFLAEHDVRVAHNPNSNLKLGSGIANVKAMLEAGMKVGIATDSVASNNNLDMFEEMRIATLLQKGIHQDATALPVETALTLATKGAAEVIGMKQTGSLEVGKCADFITIDPSNKPHLQPADEVLSHLVYAASGKDISDVIINGKRVVWNGECKTLDEERIIFEASRYKRGLQR.

Residues His65 and His67 each contribute to the Zn(2+) site. 3 residues coordinate substrate: Glu94, Arg150, and His189. Residue His216 coordinates Zn(2+). Glu219 and Asp304 together coordinate substrate. Residue Asp304 coordinates Zn(2+).

Belongs to the metallo-dependent hydrolases superfamily. MTA/SAH deaminase family. Zn(2+) serves as cofactor.

The enzyme catalyses S-adenosyl-L-homocysteine + H2O + H(+) = S-inosyl-L-homocysteine + NH4(+). The catalysed reaction is S-methyl-5'-thioadenosine + H2O + H(+) = S-methyl-5'-thioinosine + NH4(+). Functionally, catalyzes the deamination of 5-methylthioadenosine and S-adenosyl-L-homocysteine into 5-methylthioinosine and S-inosyl-L-homocysteine, respectively. Is also able to deaminate adenosine. The polypeptide is 5-methylthioadenosine/S-adenosylhomocysteine deaminase (Bacillus anthracis (strain A0248)).